The primary structure comprises 347 residues: Protein-glutamate methylesterase/protein-glutamine glutaminase 1 (347 aa).

The region spanning 6–123 (RVLVVDDSAT…LRPFGDLAEK (118 aa)) is the Response regulatory domain. Asp-57 is modified (4-aspartylphosphate). One can recognise a CheB-type methylesterase domain in the interval 150–342 (FRVGRKIVAI…EEILKMTAAR (193 aa)). Catalysis depends on residues Ser-162, His-188, and Asp-284.

The protein belongs to the CheB family. Phosphorylated by CheA. Phosphorylation of the N-terminal regulatory domain activates the methylesterase activity.

Its subcellular location is the cytoplasm. The enzyme catalyses [protein]-L-glutamate 5-O-methyl ester + H2O = L-glutamyl-[protein] + methanol + H(+). It carries out the reaction L-glutaminyl-[protein] + H2O = L-glutamyl-[protein] + NH4(+). Its function is as follows. Involved in chemotaxis. Part of a chemotaxis signal transduction system that modulates chemotaxis in response to various stimuli. Catalyzes the demethylation of specific methylglutamate residues introduced into the chemoreceptors (methyl-accepting chemotaxis proteins or MCP) by CheR. Also mediates the irreversible deamidation of specific glutamine residues to glutamic acid. The chain is Protein-glutamate methylesterase/protein-glutamine glutaminase 1 from Rhizobium johnstonii (strain DSM 114642 / LMG 32736 / 3841) (Rhizobium leguminosarum bv. viciae).